The chain runs to 385 residues: Chaperone protein DnaJ (385 aa).

The 66-residue stretch at aspartate 5–glycine 70 folds into the J domain. The CR-type zinc-finger motif lies at glycine 143–aspartate 221. Positions 156, 159, 173, 176, 195, 198, 209, and 212 each coordinate Zn(2+). CXXCXGXG motif repeat units follow at residues cysteine 156–glycine 163, cysteine 173–glycine 180, cysteine 195–glycine 202, and cysteine 209–glycine 216. Residues glycine 299 to methionine 323 are disordered.

Belongs to the DnaJ family. In terms of assembly, homodimer. It depends on Zn(2+) as a cofactor.

The protein localises to the cytoplasm. Participates actively in the response to hyperosmotic and heat shock by preventing the aggregation of stress-denatured proteins and by disaggregating proteins, also in an autonomous, DnaK-independent fashion. Unfolded proteins bind initially to DnaJ; upon interaction with the DnaJ-bound protein, DnaK hydrolyzes its bound ATP, resulting in the formation of a stable complex. GrpE releases ADP from DnaK; ATP binding to DnaK triggers the release of the substrate protein, thus completing the reaction cycle. Several rounds of ATP-dependent interactions between DnaJ, DnaK and GrpE are required for fully efficient folding. Also involved, together with DnaK and GrpE, in the DNA replication of plasmids through activation of initiation proteins. The sequence is that of Chaperone protein DnaJ from Jannaschia sp. (strain CCS1).